The primary structure comprises 233 residues: MSKLSKDYVSDSDSDDEVISNEFSIPDGFKKCKHLKNFPLNGDNKKKAKQQQVWLIKFPSNVDISKLKSLPVDFESSTTMTIDKHDYKIMDDTDIESSLTQDNLSNMTLLVPSESKESLKIASTAKDNAPLQFDKVFSVSETAKIPAIDYSKVRVPRKDVPKVEGLKLEHFATGYDAEDFHVAEEVKENKKEPKKRSHHDDEEESSEKKKKKKEKREKREKKDKKDKKKKHRD.

Phosphoserine is present on residues S10, S12, S14, and S60. The segment covering 179 to 191 (DFHVAEEVKENKK) has biased composition (basic and acidic residues). A disordered region spans residues 179-233 (DFHVAEEVKENKKEPKKRSHHDDEEESSEKKKKKKEKREKREKKDKKDKKKKHRD). A compositionally biased stretch (basic residues) spans 208–233 (KKKKKKEKREKREKKDKKDKKKKHRD).

Belongs to the eukaryotic RPA34 RNA polymerase subunit family. Component of the RNA polymerase I (Pol I) complex consisting of 14 subunits: RPA135, RPA190, RPC40, RPA14, RPB5, RPO26, RPA43, RPB8, RPA12, RPB10, RPC19, RPC10, RPA49 and RPA34. The complex is composed of a horseshoe-shaped core containing ten subunits (RPA135, RPA190, RPB5, RPO26, RPB8, RPB10, RPC10, RPA12, RPC19 and RPC40) where RPA135 and RPA190 form the DNA-binding cleft. Outside of the core, RPA14 and RPA43 form the stalk that mediates interactions with transcription initiation factors and newly synthesized RNA. Forms a TFIIF-like heterodimer with RPA49; the heterodimer formed by RPA34 and RPA49 can be dissociated from the Pol I core giving rise to a 12 subunit form A* of Pol I (formerly called pol A) that shows impaired transcript elongation activity and increased sensitivity to alpha-amanitin. The heterodimer formed by RPA34 and RPA49 stabilizes subunit RPA12 and stimulates RPA12-dependent RNA cleavage.

The protein resides in the nucleus. It localises to the nucleolus. In terms of biological role, DNA-dependent RNA polymerases catalyze the transcription of DNA into RNA using the four ribonucleoside triphosphates as substrates. Component of RNA polymerase I (Pol I) which synthesizes ribosomal RNA precursors. Besides, RNA polymerase I has intrinsic RNA cleavage activity. The heterodimer formed by RPA34 and RPA49 stimulates transcript elongation by Pol I. The chain is DNA-directed RNA polymerase I subunit RPA34 (RPA34) from Saccharomyces cerevisiae (strain ATCC 204508 / S288c) (Baker's yeast).